The chain runs to 732 residues: Formin-homology and zinc finger domains protein 1 (732 aa).

Low complexity-rich tracts occupy residues M1–S12, Q19–S45, Q121–S137, and S240–P251. Residues M1–A27 form the signal peptide. Disordered regions lie at residues M1–S45, Q121–K141, and R232–T267. Over residues S256–T267 the composition is skewed to polar residues. An FH2 domain is found at P355–P732.

The protein belongs to the formin homology family. Transiently expressed in all mesoderm derived progenitor body wall muscle cells before they differentiate.

In terms of biological role, acts redundantly with hlh-1 to promote body wall muscle cell and coelomocyte specification in postembryonic mesoderm progenitors, probably through suppression of sem-2. This Caenorhabditis elegans protein is Formin-homology and zinc finger domains protein 1.